We begin with the raw amino-acid sequence, 158 residues long: Regulator of G-protein signaling 13 (158 aa).

Positions 34–150 (SLESLMATKY…LKSEMYQQLL (117 aa)) constitute an RGS domain.

Inhibits signal transduction by increasing the GTPase activity of G protein alpha subunits thereby driving them into their inactive GDP-bound form. Binds to both G(i)-alpha and G(q)-alpha. The chain is Regulator of G-protein signaling 13 (Rgs13) from Mus musculus (Mouse).